Consider the following 125-residue polypeptide: Acidic phospholipase A2 5 (125 aa).

Residue Ser1 is a signal peptide. Positions 2–7 (NRPMPL) are excised as a propeptide. 8 disulfide bridges follow: Cys18–Cys77, Cys33–Cys124, Cys35–Cys50, Cys37–Cys54, Cys49–Cys105, Cys56–Cys98, Cys66–Cys91, and Cys84–Cys96. N-acetyl-beta-D-glucosamine is bound at residue Phe28. A Zn(2+)-binding site is contributed by Asp30. The Ca(2+) site is built by Tyr34 and Gly36. N-acetyl-beta-D-glucosamine-binding residues include His53 and Lys69. The active site involves His53. Zn(2+) is bound at residue Glu76. Residue Asp99 is part of the active site. Residue Asn117 coordinates Zn(2+).

Heterodimer formed between isoform 5 and isoform 6 in presence of zinc ion and monomer in absence of zinc ion. Ca(2+) serves as cofactor. Expressed by the venom gland.

The protein resides in the secreted. It catalyses the reaction a 1,2-diacyl-sn-glycero-3-phosphocholine + H2O = a 1-acyl-sn-glycero-3-phosphocholine + a fatty acid + H(+). PLA2 catalyzes the calcium-dependent hydrolysis of the 2-acyl groups in 3-sn-phosphoglycerides. In Naja sagittifera (Andaman cobra), this protein is Acidic phospholipase A2 5.